A 945-amino-acid polypeptide reads, in one-letter code: Isoleucine--tRNA ligase (945 aa).

The span at 1–10 (MSNKKADSKP) shows a compositional bias: basic and acidic residues. The interval 1 to 21 (MSNKKADSKPQAKYPVNLLDT) is disordered. The short motif at 66 to 76 (PYANGDIHLGH) is the 'HIGH' region element. Glu581 contacts L-isoleucyl-5'-AMP. Residues 622–626 (KMSKS) carry the 'KMSKS' region motif. Lys625 contributes to the ATP binding site. Positions 908, 911, 928, and 931 each coordinate Zn(2+).

Belongs to the class-I aminoacyl-tRNA synthetase family. IleS type 1 subfamily. In terms of assembly, monomer. Zn(2+) serves as cofactor.

The protein localises to the cytoplasm. The catalysed reaction is tRNA(Ile) + L-isoleucine + ATP = L-isoleucyl-tRNA(Ile) + AMP + diphosphate. Catalyzes the attachment of isoleucine to tRNA(Ile). As IleRS can inadvertently accommodate and process structurally similar amino acids such as valine, to avoid such errors it has two additional distinct tRNA(Ile)-dependent editing activities. One activity is designated as 'pretransfer' editing and involves the hydrolysis of activated Val-AMP. The other activity is designated 'posttransfer' editing and involves deacylation of mischarged Val-tRNA(Ile). The polypeptide is Isoleucine--tRNA ligase (Burkholderia multivorans (strain ATCC 17616 / 249)).